The sequence spans 452 residues: Ketoisovalerate reductase BEA2 (452 aa).

Residue 70–75 participates in NADP(+) binding; the sequence is GPGNIG. Lys-285 serves as the catalytic Proton donor. 3 residues coordinate substrate: Asn-289, Asn-293, and Ser-393. Glu-405 provides a ligand contact to NADP(+).

The protein belongs to the ketopantoate reductase family.

It catalyses the reaction (R)-2-hydroxy-3-methylbutanoate + NADP(+) = 3-methyl-2-oxobutanoate + NADPH + H(+). Its function is as follows. Ketoisovalerate reductase; part of the gene cluster that mediates the biosynthesis of beauvericin (BEA), a non-ribosomal cyclic hexadepsipeptide that shows antibiotic, antifungal, insecticidal, and cancer cell antiproliferative and antihaptotactic activity. Ketoisovalerate reductase BEA2 catalyzes the NADPH-specific reduction of ketoisovaleric acid to hydroxyisovalerate, a precursor for beauvericin biosynthesis. The nonribosomal cyclodepsipeptide synthetase BEA1 then catalyzes the formation of beauvericin via condensation and cyclization of 3 dipeptidol monomers, each composed of one unit of hydroxyisovalerate and one unit of N-methyl-phenylalanine. The sequence is that of Ketoisovalerate reductase BEA2 from Gibberella fujikuroi (strain CBS 195.34 / IMI 58289 / NRRL A-6831) (Bakanae and foot rot disease fungus).